The primary structure comprises 59 residues: Large ribosomal subunit protein bL32 (59 aa).

Residues 1 to 24 form a disordered region; it reads MAVQQNKKSPSKRGMHRSHDFLTS.

Belongs to the bacterial ribosomal protein bL32 family.

This Ralstonia nicotianae (strain ATCC BAA-1114 / GMI1000) (Ralstonia solanacearum) protein is Large ribosomal subunit protein bL32.